The primary structure comprises 402 residues: Calcium-responsive transactivator (402 aa).

The segment at Met-1–Ser-148 is N-terminal auto-inhibitory domain; necessary for interaction with SMARCA4/BRG1. An SH2-binding motif is present at residues Tyr-50–Ile-53. Disordered stretches follow at residues Gln-72–Gln-171 and Ala-221–Gln-402. Residues Leu-85–Ser-106 show a composition bias toward low complexity. Polar residues-rich tracts occupy residues Asn-128–Gly-149 and Ser-161–Gln-171. Residues Gly-149–Met-238 form a methionine-rich intra-molecular domain region. A compositionally biased stretch (low complexity) spans Met-233–Gln-251. The segment at Tyr-252–Tyr-323 is MFD domain. A compositionally biased stretch (polar residues) spans Glu-261–Tyr-277. Residues Ser-296 to Thr-305 are compositionally biased toward basic and acidic residues. Residues Gly-311–Tyr-375 show a composition bias toward low complexity. Residues Asn-340–Gln-402 form a necessary for nuclear localization region. The SH2-binding signature appears at Ser-359–Ser-362. A compositionally biased stretch (polar residues) spans Arg-376 to Arg-388. An SH3-binding motif is present at residues Thr-377 to Gln-385. The segment covering Tyr-390 to Gln-402 has biased composition (low complexity). The necessary for interaction with CREBBP and for the recruitment of CREBBP to the nuclear bodies stretch occupies residues Glu-393–Gln-402. The short motif at Tyr-397–Tyr-400 is the SH2-binding element.

This sequence belongs to the SS18 family. As to quaternary structure, homodimer. Dimerization may be necessary for its function in neuronal dendritic development. Interacts (via C-terminus) with CREBBP (via N-terminus), EP300 and SMARCA4/BRG1. Interacts with the nBAF complex. Association with CREBBP facilitates transcription while the association with SMARCA4/BRG1 suppresses CREST-mediated transcription in resting neurons.

Its subcellular location is the nucleus. It localises to the chromosome. The protein localises to the centromere. It is found in the kinetochore. Transcriptional activator which is required for calcium-dependent dendritic growth and branching in cortical neurons. Recruits CREB-binding protein (CREBBP) to nuclear bodies. Component of the CREST-BRG1 complex, a multiprotein complex that regulates promoter activation by orchestrating a calcium-dependent release of a repressor complex and a recruitment of an activator complex. In resting neurons, transcription of the c-FOS promoter is inhibited by BRG1-dependent recruitment of a phospho-RB1-HDAC1 repressor complex. Upon calcium influx, RB1 is dephosphorylated by calcineurin, which leads to release of the repressor complex. At the same time, there is increased recruitment of CREBBP to the promoter by a CREST-dependent mechanism, which leads to transcriptional activation. The CREST-BRG1 complex also binds to the NR2B promoter, and activity-dependent induction of NR2B expression involves a release of HDAC1 and recruitment of CREBBP. This chain is Calcium-responsive transactivator (Ss18l1), found in Mus musculus (Mouse).